The following is a 253-amino-acid chain: Allene oxide cyclase 2, chloroplastic (253 aa).

The N-terminal 77 residues, 1 to 77 (MASSAVSLQS…SQNGNIENPR (77 aa)), are a transit peptide targeting the chloroplast.

The protein belongs to the allene oxide cyclase family. In terms of tissue distribution, highly expressed in fully developed leaves.

It is found in the plastid. The protein resides in the chloroplast. The enzyme catalyses (9Z,13S,15Z)-12,13-epoxyoctadeca-9,11,15-trienoate = (9S,13S,15Z)-12-oxophyto-10,15-dienoate. In terms of biological role, involved in the production of 12-oxo-phytodienoic acid (OPDA), a precursor of jasmonic acid. The sequence is that of Allene oxide cyclase 2, chloroplastic (AOC2) from Arabidopsis thaliana (Mouse-ear cress).